Here is a 522-residue protein sequence, read N- to C-terminus: Putative glucosylceramidase 3 (522 aa).

Residues 1-21 (MSRWKVVILCLLSFMFEIGHA) form the signal peptide. The active-site Proton donor is the glutamate 259. The Nucleophile role is filled by glutamate 364.

The protein belongs to the glycosyl hydrolase 30 family.

It catalyses the reaction a beta-D-glucosylceramide + H2O = an N-acyl-sphingoid base + D-glucose. It carries out the reaction a beta-D-glucosyl-(1&lt;-&gt;1')-N-acylsphing-4-enine + H2O = an N-acylsphing-4-enine + D-glucose. The enzyme catalyses an N-acyl-1-beta-D-glucosyl-15-methylhexadecasphing-4-enine + H2O = an N-acyl-15-methylhexadecasphing-4-enine + D-glucose. Its pathway is lipid metabolism; sphingolipid metabolism. In terms of biological role, glucosylceramidase that catalyzes the hydrolysis of glucosylceramides into free ceramides and glucose. C.elegans contain specific sphingoid bases, which are unique or different in structure compared to the sphingoid bases found in other animals. Two examples of these distinctive compounds are: 15-methylhexadecasphinganine and 15-methylhexadecasphing-4-enine. In Caenorhabditis elegans, this protein is Putative glucosylceramidase 3.